A 1977-amino-acid polypeptide reads, in one-letter code: Protein rotatin homolog (1977 aa).

A disordered region spans residues 141–166; the sequence is SVSSLSSNDIPSQATESADSSSNQIY.

Belongs to the rotatin family. In terms of assembly, interacts with Rcd4;this complex is recruited to daughter centrioles before their conversion to centrosomes.

Its subcellular location is the cytoplasm. It localises to the cytoskeleton. It is found in the microtubule organizing center. The protein localises to the centrosome. The protein resides in the centriole. Functionally, participes in the structural integrity of both centrioles and basal bodies and in centriole cohesion. Participates in the later stages of centriole assembly through the interaction with Rcd4 leading to the centriole to centrosome conversion. This Drosophila melanogaster (Fruit fly) protein is Protein rotatin homolog.